The sequence spans 156 residues: uncharacterized protein (156 aa).

Residues Met-1 to Ala-22 form the signal peptide. Ser-129 is lipidated: GPI-anchor amidated serine. The propeptide at Gly-130–Leu-156 is removed in mature form.

The protein resides in the cell membrane. This is an uncharacterized protein from Schizosaccharomyces pombe (strain 972 / ATCC 24843) (Fission yeast).